The primary structure comprises 160 residues: SsrA-binding protein (160 aa).

A disordered region spans residues 131-160 (KKEYDKRHTERERDSDRELQRAVRTKGKED).

It belongs to the SmpB family.

It is found in the cytoplasm. Its function is as follows. Required for rescue of stalled ribosomes mediated by trans-translation. Binds to transfer-messenger RNA (tmRNA), required for stable association of tmRNA with ribosomes. tmRNA and SmpB together mimic tRNA shape, replacing the anticodon stem-loop with SmpB. tmRNA is encoded by the ssrA gene; the 2 termini fold to resemble tRNA(Ala) and it encodes a 'tag peptide', a short internal open reading frame. During trans-translation Ala-aminoacylated tmRNA acts like a tRNA, entering the A-site of stalled ribosomes, displacing the stalled mRNA. The ribosome then switches to translate the ORF on the tmRNA; the nascent peptide is terminated with the 'tag peptide' encoded by the tmRNA and targeted for degradation. The ribosome is freed to recommence translation, which seems to be the essential function of trans-translation. The protein is SsrA-binding protein of Pseudomonas fluorescens (strain ATCC BAA-477 / NRRL B-23932 / Pf-5).